Here is a 534-residue protein sequence, read N- to C-terminus: UDP-glucuronosyltransferase 1A5 (534 aa).

The first 28 residues, 1 to 28 (MATGLQVPLPQLATGLLLLLSVQPWAES), serve as a signal peptide directing secretion. Residues asparagine 119, asparagine 296, and asparagine 348 are each glycosylated (N-linked (GlcNAc...) asparagine). Residues 492-508 (VIGFLLAVVLTVAFITF) form a helical membrane-spanning segment.

Belongs to the UDP-glycosyltransferase family. Homodimer. Homooligomer. Interacts with UGT1A1, UGT1A3, UGT1A4, UGT1A6, UGT1A7, UGT1A8, UGT1A9 and UGT1A10 to form heterodimers. Isoform 1 interacts with isoform 2/i2 suggesting that oligomerization is involved in negative regulation of transferase activity by isoform 2. Isoform 1 also interacts with respective i2 isoforms of UGT1A1, UGT1A3, UGT1A4, UGT1A6, UGT1A7, UGT1A8, UGT1A9 and UGT1A10. In terms of tissue distribution, isoform 1 and isoform 2 are expressed in colon and small intestine. Neither isoform is expressed in liver, kidney or esophagus.

The protein localises to the endoplasmic reticulum membrane. It catalyses the reaction glucuronate acceptor + UDP-alpha-D-glucuronate = acceptor beta-D-glucuronoside + UDP + H(+). The enzyme catalyses zolasartan + UDP-alpha-D-glucuronate = zolarsartan-1-N-beta-D-glucuronide + UDP. Functionally, UDP-glucuronosyltransferase (UGT) that catalyzes phase II biotransformation reactions in which lipophilic substrates are conjugated with glucuronic acid to increase the metabolite's water solubility, thereby facilitating excretion into either the urine or bile. Essential for the elimination and detoxification of drugs, xenobiotics and endogenous compounds. Involved in the glucuronidation of the AGTR1 angiotensin receptor antagonist zolarsatan, a drug which can inhibit the effect of angiotensin II. Lacks UGT glucuronidation activity but acts as a negative regulator of isoform 1. In Homo sapiens (Human), this protein is UDP-glucuronosyltransferase 1A5.